Reading from the N-terminus, the 172-residue chain is Shikimate kinase (172 aa).

12 to 17 (GSGKTS) is an ATP binding site. Threonine 16 serves as a coordination point for Mg(2+). Substrate contacts are provided by aspartate 34, arginine 58, and glycine 81. Arginine 122 provides a ligand contact to ATP. Arginine 139 serves as a coordination point for substrate.

The protein belongs to the shikimate kinase family. In terms of assembly, monomer. Mg(2+) serves as cofactor.

The protein localises to the cytoplasm. It catalyses the reaction shikimate + ATP = 3-phosphoshikimate + ADP + H(+). The protein operates within metabolic intermediate biosynthesis; chorismate biosynthesis; chorismate from D-erythrose 4-phosphate and phosphoenolpyruvate: step 5/7. Functionally, catalyzes the specific phosphorylation of the 3-hydroxyl group of shikimic acid using ATP as a cosubstrate. The sequence is that of Shikimate kinase from Dictyoglomus turgidum (strain DSM 6724 / Z-1310).